The following is a 101-amino-acid chain: Small ribosomal subunit protein uS14 (101 aa).

The protein belongs to the universal ribosomal protein uS14 family. Part of the 30S ribosomal subunit. Contacts proteins S3 and S10.

Binds 16S rRNA, required for the assembly of 30S particles and may also be responsible for determining the conformation of the 16S rRNA at the A site. This is Small ribosomal subunit protein uS14 from Ehrlichia chaffeensis (strain ATCC CRL-10679 / Arkansas).